Reading from the N-terminus, the 385-residue chain is Polyketide synthase 1 (385 aa).

Cysteine 157 is an active-site residue.

This sequence belongs to the thiolase-like superfamily. Chalcone/stilbene synthases family. Expressed in glandular trichomes.

The protein localises to the cytoplasm. Functionally, polyketide synthase responsible for the biosynthesis of secondary metabolites. The protein is Polyketide synthase 1 (PKSG1) of Cannabis sativa (Hemp).